The primary structure comprises 20 residues: Unknown protein NF015 from 2D-PAGE (20 aa).

The disordered stretch occupies residues 1 to 20; it reads TPQIQKPAPQFSKTALLPDE.

In Naegleria fowleri (Brain eating amoeba), this protein is Unknown protein NF015 from 2D-PAGE.